The following is a 437-amino-acid chain: Histidinol dehydrogenase (437 aa).

NAD(+) contacts are provided by Tyr137, Gln199, and Asn222. Residues Ser245, Gln267, and His270 each coordinate substrate. Positions 267 and 270 each coordinate Zn(2+). Residues Glu335 and His336 each act as proton acceptor in the active site. Substrate contacts are provided by His336, Asp369, Glu423, and His428. Asp369 serves as a coordination point for Zn(2+). Residue His428 participates in Zn(2+) binding.

Belongs to the histidinol dehydrogenase family. The cofactor is Zn(2+).

It carries out the reaction L-histidinol + 2 NAD(+) + H2O = L-histidine + 2 NADH + 3 H(+). It participates in amino-acid biosynthesis; L-histidine biosynthesis; L-histidine from 5-phospho-alpha-D-ribose 1-diphosphate: step 9/9. Catalyzes the sequential NAD-dependent oxidations of L-histidinol to L-histidinaldehyde and then to L-histidine. This Parasynechococcus marenigrum (strain WH8102) protein is Histidinol dehydrogenase.